Here is a 321-residue protein sequence, read N- to C-terminus: Chloroplastic calcium uniporter protein (321 aa).

The N-terminal 56 residues, 1–56, are a transit peptide targeting the chloroplast; that stretch reads MSSKKSLVQSLFNISKTYSRISGLTRMRPTKSGGIPPDAGDSGIRRRFLHKRAFFS. The next 2 membrane-spanning stretches (helical) occupy residues 223 to 243 and 249 to 269; these read LWAGLGLIMAQTVGFFRLTFW and VMEPICFYVTSTYFMAGYAFF. Positions 247-255 match the Selectivity filter motif; the sequence is WDVMEPICF. Ca(2+) is bound at residue E251.

The protein belongs to the MCU (TC 1.A.77) family.

It is found in the plastid. It localises to the chloroplast membrane. It catalyses the reaction Ca(2+)(in) = Ca(2+)(out). Functionally, chloroplastic membrane calcium uniporter that mediates calcium uptake into chloroplast stroma. Constitutes a pore-forming and calcium-conducting subunit. Chloroplastic calcium homeostasis plays key roles in cellular physiology. Promotes calcium uptake into chloroplast stroma in response to osmotic-stress, fine-tuning cytosolic MAPK3/MAPK6 phosphorylation and affecting stomata opening. In Arabidopsis thaliana (Mouse-ear cress), this protein is Chloroplastic calcium uniporter protein.